We begin with the raw amino-acid sequence, 1578 residues long: Pentafunctional AROM polypeptide (1578 aa).

The 3-dehydroquinate synthase stretch occupies residues methionine 1–aspartate 393. NAD(+) is bound by residues aspartate 44–asparagine 46, glutamate 79–lysine 82, glycine 110–valine 112, and aspartate 115. Residue arginine 126 participates in 7-phospho-2-dehydro-3-deoxy-D-arabino-heptonate binding. Threonine 135–serine 136 is an NAD(+) binding site. 7-phospho-2-dehydro-3-deoxy-D-arabino-heptonate-binding residues include aspartate 142 and lysine 148. Lysine 157 is an NAD(+) binding site. Asparagine 158 is a binding site for 7-phospho-2-dehydro-3-deoxy-D-arabino-heptonate. Residues tryptophan 175–threonine 178 and asparagine 186 contribute to the NAD(+) site. Glutamate 190 is a Zn(2+) binding site. Residues glutamate 190–lysine 193 and lysine 259 each bind 7-phospho-2-dehydro-3-deoxy-D-arabino-heptonate. Glutamate 269 serves as the catalytic Proton acceptor; for 3-dehydroquinate synthase activity. 7-phospho-2-dehydro-3-deoxy-D-arabino-heptonate contacts are provided by residues arginine 273 to asparagine 277 and histidine 280. Histidine 280 contributes to the Zn(2+) binding site. Histidine 284 serves as the catalytic Proton acceptor; for 3-dehydroquinate synthase activity. 7-phospho-2-dehydro-3-deoxy-D-arabino-heptonate-binding residues include histidine 296 and lysine 365. Zn(2+) is bound at residue histidine 296. Positions valine 406–alanine 863 are EPSP synthase. Residue cysteine 845 is the For EPSP synthase activity of the active site. Residues valine 882–cysteine 1071 are shikimate kinase. An ATP-binding site is contributed by glycine 886–serine 893. Residues leucine 1072–glutamate 1284 form a 3-dehydroquinase region. Histidine 1189 acts as the Proton acceptor; for 3-dehydroquinate dehydratase activity in catalysis. Catalysis depends on lysine 1218, which acts as the Schiff-base intermediate with substrate; for 3-dehydroquinate dehydratase activity. The shikimate dehydrogenase stretch occupies residues alanine 1297–glutamate 1578.

This sequence in the N-terminal section; belongs to the sugar phosphate cyclases superfamily. Dehydroquinate synthase family. In the 2nd section; belongs to the EPSP synthase family. The protein in the 3rd section; belongs to the shikimate kinase family. It in the 4th section; belongs to the type-I 3-dehydroquinase family. This sequence in the C-terminal section; belongs to the shikimate dehydrogenase family. As to quaternary structure, homodimer. It depends on Zn(2+) as a cofactor.

It localises to the cytoplasm. The catalysed reaction is 7-phospho-2-dehydro-3-deoxy-D-arabino-heptonate = 3-dehydroquinate + phosphate. It carries out the reaction 3-dehydroquinate = 3-dehydroshikimate + H2O. The enzyme catalyses shikimate + NADP(+) = 3-dehydroshikimate + NADPH + H(+). It catalyses the reaction shikimate + ATP = 3-phosphoshikimate + ADP + H(+). The catalysed reaction is 3-phosphoshikimate + phosphoenolpyruvate = 5-O-(1-carboxyvinyl)-3-phosphoshikimate + phosphate. It participates in metabolic intermediate biosynthesis; chorismate biosynthesis; chorismate from D-erythrose 4-phosphate and phosphoenolpyruvate: step 2/7. The protein operates within metabolic intermediate biosynthesis; chorismate biosynthesis; chorismate from D-erythrose 4-phosphate and phosphoenolpyruvate: step 3/7. Its pathway is metabolic intermediate biosynthesis; chorismate biosynthesis; chorismate from D-erythrose 4-phosphate and phosphoenolpyruvate: step 4/7. It functions in the pathway metabolic intermediate biosynthesis; chorismate biosynthesis; chorismate from D-erythrose 4-phosphate and phosphoenolpyruvate: step 5/7. It participates in metabolic intermediate biosynthesis; chorismate biosynthesis; chorismate from D-erythrose 4-phosphate and phosphoenolpyruvate: step 6/7. Functionally, the AROM polypeptide catalyzes 5 consecutive enzymatic reactions in prechorismate polyaromatic amino acid biosynthesis. The protein is Pentafunctional AROM polypeptide of Kluyveromyces lactis (strain ATCC 8585 / CBS 2359 / DSM 70799 / NBRC 1267 / NRRL Y-1140 / WM37) (Yeast).